A 372-amino-acid polypeptide reads, in one-letter code: 4-hydroxy-3-methylbut-2-en-1-yl diphosphate synthase (flavodoxin) (372 aa).

[4Fe-4S] cluster is bound by residues Cys270, Cys273, Cys305, and Glu312.

This sequence belongs to the IspG family. [4Fe-4S] cluster is required as a cofactor.

It catalyses the reaction (2E)-4-hydroxy-3-methylbut-2-enyl diphosphate + oxidized [flavodoxin] + H2O + 2 H(+) = 2-C-methyl-D-erythritol 2,4-cyclic diphosphate + reduced [flavodoxin]. The protein operates within isoprenoid biosynthesis; isopentenyl diphosphate biosynthesis via DXP pathway; isopentenyl diphosphate from 1-deoxy-D-xylulose 5-phosphate: step 5/6. Converts 2C-methyl-D-erythritol 2,4-cyclodiphosphate (ME-2,4cPP) into 1-hydroxy-2-methyl-2-(E)-butenyl 4-diphosphate. The sequence is that of 4-hydroxy-3-methylbut-2-en-1-yl diphosphate synthase (flavodoxin) from Escherichia coli O9:H4 (strain HS).